The chain runs to 247 residues: TLC domain-containing protein 1 (247 aa).

The first 27 residues, 1–27 (MPLLLHPAWPLLLGATLTFRALRRVLC), serve as a signal peptide directing secretion. Residues 28 to 46 (RLPLPAHVQTDPLRTWRWH) are Extracellular-facing. The TLC domain occupies 40–234 (LRTWRWHNLL…LLRSDFCPER (195 aa)). The helical transmembrane segment at 47–67 (NLLVSFTHSIVSGIWALLCIW) threads the bilayer. Topologically, residues 68–83 (QTPEMLVEIETAWSVC) are cytoplasmic. A helical transmembrane segment spans residues 84 to 104 (GYLLVCFSAGYFIHDTVDIVV). Topologically, residues 105–123 (SRQTRASWEYLVHHVMAMG) are extracellular. Positions 124–144 (AFFSGIFWKRFVGGGVLTLLV) form an intramembrane region, helical. Over 145 to 173 (EVSNIFLTLRMMMKINNAQDILLYKVNKY) the chain is Extracellular. The chain crosses the membrane as a helical span at residues 174-194 (VNLVMYFLFRLAPQAYLTKFF). Residues 195–201 (LQYAGQR) are Cytoplasmic-facing. A helical transmembrane segment spans residues 202 to 222 (TLGTFLLSILLMLDVMILIYF). Residues 223-247 (SRLLRSDFCPERAPSRQQKDKFLTE) lie on the Extracellular side of the membrane.

The protein resides in the cell membrane. Its function is as follows. Regulates the composition and fluidity of the plasma membrane. Inhibits the incorporation of membrane-fluidizing phospholipids containing omega-3 long-chain polyunsaturated fatty acids (LCPUFA) and thereby promotes membrane rigidity. Does not appear to have any effect on LCPUFA synthesis. The sequence is that of TLC domain-containing protein 1 (Tlcd1) from Rattus norvegicus (Rat).